The following is a 150-amino-acid chain: Small ribosomal subunit protein eS19 (150 aa).

This sequence belongs to the eukaryotic ribosomal protein eS19 family. In terms of assembly, part of the 30S ribosomal subunit.

In terms of biological role, may be involved in maturation of the 30S ribosomal subunit. This is Small ribosomal subunit protein eS19 from Thermococcus kodakarensis (strain ATCC BAA-918 / JCM 12380 / KOD1) (Pyrococcus kodakaraensis (strain KOD1)).